A 274-amino-acid chain; its full sequence is 2,3,4,5-tetrahydropyridine-2,6-dicarboxylate N-succinyltransferase (274 aa).

Substrate contacts are provided by Arg106 and Asp143.

This sequence belongs to the transferase hexapeptide repeat family. As to quaternary structure, homotrimer.

The protein localises to the cytoplasm. It carries out the reaction (S)-2,3,4,5-tetrahydrodipicolinate + succinyl-CoA + H2O = (S)-2-succinylamino-6-oxoheptanedioate + CoA. It participates in amino-acid biosynthesis; L-lysine biosynthesis via DAP pathway; LL-2,6-diaminopimelate from (S)-tetrahydrodipicolinate (succinylase route): step 1/3. The chain is 2,3,4,5-tetrahydropyridine-2,6-dicarboxylate N-succinyltransferase from Rickettsia conorii (strain ATCC VR-613 / Malish 7).